The chain runs to 138 residues: Small ribosomal subunit protein uS11c (138 aa).

It belongs to the universal ribosomal protein uS11 family. Part of the 30S ribosomal subunit.

It is found in the plastid. The protein localises to the chloroplast. The chain is Small ribosomal subunit protein uS11c from Morus indica (Mulberry).